A 220-amino-acid polypeptide reads, in one-letter code: Small ribosomal subunit protein uS5 (220 aa).

Residues 1 to 39 (MAEQPAGQAGTTDNRDARGDREGRRRDSGRGSRERDGEK) are disordered. Positions 13–39 (DNRDARGDREGRRRDSGRGSRERDGEK) are enriched in basic and acidic residues. The S5 DRBM domain maps to 42-105 (YLERVVAINR…EEARKSFFRV (64 aa)).

This sequence belongs to the universal ribosomal protein uS5 family. Part of the 30S ribosomal subunit. Contacts proteins S4 and S8.

Functionally, with S4 and S12 plays an important role in translational accuracy. Located at the back of the 30S subunit body where it stabilizes the conformation of the head with respect to the body. The sequence is that of Small ribosomal subunit protein uS5 from Mycobacterium bovis (strain ATCC BAA-935 / AF2122/97).